The chain runs to 108 residues: Thiosulfate sulfurtransferase GlpE (108 aa).

One can recognise a Rhodanese domain in the interval 17–105 (QEKEAVLVDI…WQRQFPAEVA (89 aa)). The active-site Cysteine persulfide intermediate is the Cys-65.

It belongs to the GlpE family.

Its subcellular location is the cytoplasm. It catalyses the reaction thiosulfate + hydrogen cyanide = thiocyanate + sulfite + 2 H(+). The enzyme catalyses thiosulfate + [thioredoxin]-dithiol = [thioredoxin]-disulfide + hydrogen sulfide + sulfite + 2 H(+). Its function is as follows. Transferase that catalyzes the transfer of sulfur from thiosulfate to thiophilic acceptors such as cyanide or dithiols. May function in a CysM-independent thiosulfate assimilation pathway by catalyzing the conversion of thiosulfate to sulfite, which can then be used for L-cysteine biosynthesis. The protein is Thiosulfate sulfurtransferase GlpE of Escherichia coli O8 (strain IAI1).